We begin with the raw amino-acid sequence, 327 residues long: Replication factor C small subunit (327 aa).

47–54 provides a ligand contact to ATP; that stretch reads GPPGTGKT.

Belongs to the activator 1 small subunits family. RfcS subfamily. As to quaternary structure, heteromultimer composed of small subunits (RfcS) and large subunits (RfcL).

Its function is as follows. Part of the RFC clamp loader complex which loads the PCNA sliding clamp onto DNA. The polypeptide is Replication factor C small subunit (Sulfurisphaera tokodaii (strain DSM 16993 / JCM 10545 / NBRC 100140 / 7) (Sulfolobus tokodaii)).